The chain runs to 67 residues: Large ribosomal subunit protein uL29 (67 aa).

It belongs to the universal ribosomal protein uL29 family.

This Wolbachia sp. subsp. Drosophila simulans (strain wRi) protein is Large ribosomal subunit protein uL29.